A 354-amino-acid polypeptide reads, in one-letter code: Probable DNA repair protein RAD51 homolog 4 (354 aa).

Residue 115-122 participates in ATP binding; the sequence is GNTSCGKT.

The protein belongs to the RecA family. RAD51 subfamily.

It localises to the nucleus. Functionally, involved in the homologous recombination repair (HRR) pathway of double-stranded DNA breaks arising during DNA replication or induced by DNA-damaging agents. In Dictyostelium discoideum (Social amoeba), this protein is Probable DNA repair protein RAD51 homolog 4 (rad51d).